We begin with the raw amino-acid sequence, 187 residues long: Large ribosomal subunit protein uL5 (187 aa).

The protein belongs to the universal ribosomal protein uL5 family. As to quaternary structure, part of the 50S ribosomal subunit; part of the 5S rRNA/L5/L18/L25 subcomplex. Contacts the 5S rRNA and the P site tRNA. Forms a bridge to the 30S subunit in the 70S ribosome.

Its function is as follows. This is one of the proteins that bind and probably mediate the attachment of the 5S RNA into the large ribosomal subunit, where it forms part of the central protuberance. In the 70S ribosome it contacts protein S13 of the 30S subunit (bridge B1b), connecting the 2 subunits; this bridge is implicated in subunit movement. Contacts the P site tRNA; the 5S rRNA and some of its associated proteins might help stabilize positioning of ribosome-bound tRNAs. In Dinoroseobacter shibae (strain DSM 16493 / NCIMB 14021 / DFL 12), this protein is Large ribosomal subunit protein uL5.